We begin with the raw amino-acid sequence, 391 residues long: MIRPFLLLAAVGLLTACAQQPLRGTGDLGVVVERATGSLQIIESSNQSQIARIEGLGDLSHASVVFSRDQRYAYVFGRDGGLTKVDLLRHRIDRRVIQGGNSIGGAISQDGTLIAVGNYEPGGVKVFDAKTLELVADIPATPLADGSRNARVVGVIDVPGRRFIYSLFDTDETWLLDFSQGNEPQITRFEGIGRQPYDALLTPEGRYYIAGLFGEDGMAKIDLWHPERGVERILDGYGRGEQKLPVYKMPHLEGWTVAGNQTFVPAVGQHRVLVMDSQNWQQTAAIDVAGQPIFVMARPDARQIWVNFAHPDNHRVQVIDSETHEIIADLEPGPAVLHMEFTARGDQLWLSVRDGEEIQVWDPYTLKLLKRLPAHSPSGIFFSSRAHETGL.

The protein localises to the cytoplasm. Functionally, required for the biosynthesis of heme d1 of nitrite reductase. Could have a dehydrogenase activity yielding sirohydrochlorin from precorrin-2 or dehydrogenation of propionate side chain C17. The chain is Protein NirF (nirF) from Stutzerimonas stutzeri (Pseudomonas stutzeri).